Here is a 330-residue protein sequence, read N- to C-terminus: Protoheme IX farnesyltransferase (330 aa).

A run of 9 helical transmembrane segments spans residues 30 to 50, 58 to 78, 106 to 126, 127 to 147, 155 to 175, 182 to 202, 228 to 248, 249 to 269, and 281 to 301; these read LVKPKIIALLLMTTAGAMWMA, FFITLLGGGIAAAAANVINMV, LIFSGILALAAFGLLAIFTNL, LAAGLAMSGILVYVGVYTHWL, IVIGGAAGAIPPLVGWAATTG, WVMFAIIFLWTPPHFWALAIL, ILLYALLMVPVSLLLVYPLGM, LGSFYLSAAALLGSLLVWKAV, and AASLFTFANLYLLLLCGAMGL.

It belongs to the UbiA prenyltransferase family. Protoheme IX farnesyltransferase subfamily.

It is found in the cell inner membrane. The enzyme catalyses heme b + (2E,6E)-farnesyl diphosphate + H2O = Fe(II)-heme o + diphosphate. Its pathway is porphyrin-containing compound metabolism; heme O biosynthesis; heme O from protoheme: step 1/1. In terms of biological role, converts heme B (protoheme IX) to heme O by substitution of the vinyl group on carbon 2 of heme B porphyrin ring with a hydroxyethyl farnesyl side group. This chain is Protoheme IX farnesyltransferase, found in Synechococcus sp. (strain JA-2-3B'a(2-13)) (Cyanobacteria bacterium Yellowstone B-Prime).